The following is an 833-amino-acid chain: MVPSRRTWNLGATPSLRGLWRVGRAPEPEPGMARPAPAPASPAARPFPHTGPGRLRTGRGKDTPVCGDEDSSARSAARPALAQCRALSVDWAGPGSPHGLYLTLQVEHLKEKLISQAQEVSRLRSELGGTDLEKHRDLLMVENERLRQEMRRCEAELQELRTKPAGPCPGCEHSQESAQLRDKLSQLQLEMAESKGMLSELNLEVQQKTDRLAEVELRLKDCLAEKAQEEERLSRRLRDSHETIASLRAQSPPVKYVIKTVEVESSKTKQALSESQARNQHLQEQVAMQRQVLKEMEQQLQSSHQLTARLRAQIAMYESELERAHGQMLEEMQSLEEDKNRAIEEAFARAQVEMKAVHENLAGVRTNLLTLQPALRTLTNDYNGLKRQVRGFPLLLQEALRSVKAEIGQAIEEVNSNNQELLRKYRRELQLRKKCHNELVRLKGNIRVIARVRPVTKEDGEGPEATNAVTFDADDDSIIHLLHKGKPVSFELDKVFSPQASQQDVFQEVQALVTSCIDGFNVCIFAYGQTGAGKTYTMEGTAENPGINQRALQLLFSEVQEKASDWEYTITVSAAEIYNEVLRDLLGKEPQEKLEIRLCPDGSGQLYVPGLTEFQVQSVDDINKVFEFGHTNRTTEFTNLNEHSSRSHALLIVTVRGVDCSTGLRTTGKLNLVDLAGSERVGKSGAEGSRLREAQHINKSLSALGDVIAALRSRQGHVPFRNSKLTYLLQDSLSGDSKTLMVVQVSPVEKNTSETLYSLKFAERVRSVELGPGLRRAELGSWSSQEHLEWEPACQTPQPSARAHSAPSSGTSSRPGSIRRKLQPSGKSRPLPV.

Residues 19-74 (LWRVGRAPEPEPGMARPAPAPASPAARPFPHTGPGRLRTGRGKDTPVCGDEDSSAR) are disordered. Low complexity predominate over residues 30–48 (PGMARPAPAPASPAARPFP). Coiled-coil stretches lie at residues 102–362 (LTLQ…ENLA) and 395–432 (LLQE…LQLR). The 324-residue stretch at 445–768 (NIRVIARVRP…LKFAERVRSV (324 aa)) folds into the Kinesin motor domain. 528 to 535 (GQTGAGKT) provides a ligand contact to ATP. The segment at 786–833 (EHLEWEPACQTPQPSARAHSAPSSGTSSRPGSIRRKLQPSGKSRPLPV) is disordered. The span at 806-815 (APSSGTSSRP) shows a compositional bias: polar residues. Ser813 and Ser817 each carry phosphoserine.

It belongs to the TRAFAC class myosin-kinesin ATPase superfamily. Kinesin family.

It is found in the cell junction. It localises to the adherens junction. The protein resides in the cytoplasm. The protein localises to the cytoskeleton. Its subcellular location is the microtubule organizing center. It is found in the centrosome. It localises to the cytoplasmic vesicle membrane. Functionally, minus-end microtubule-dependent motor protein. Involved in apically targeted transport. Required for zonula adherens maintenance. The chain is Kinesin-like protein KIFC3 (KIFC3) from Homo sapiens (Human).